Here is a 345-residue protein sequence, read N- to C-terminus: L-erythro-3,5-diaminohexanoate dehydrogenase (345 aa).

Belongs to the KDD family. In terms of assembly, homodimer.

It carries out the reaction (3S,5S)-3,5-diaminohexanoate + NAD(+) + H2O = (5S)-5-amino-3-oxohexanoate + NH4(+) + NADH + H(+). Its pathway is amino-acid degradation; L-lysine degradation via acetate pathway. Its function is as follows. Involved in the anaerobic fermentation of lysine. Catalyzes the oxidative deamination of L-erythro-3,5-diaminohexanoate (3,5-DAH) to 3-keto-5-aminohexanoate (KAH). It can use NAD or NADP. The sequence is that of L-erythro-3,5-diaminohexanoate dehydrogenase from Fusobacterium nucleatum subsp. nucleatum (strain ATCC 25586 / DSM 15643 / BCRC 10681 / CIP 101130 / JCM 8532 / KCTC 2640 / LMG 13131 / VPI 4355).